Reading from the N-terminus, the 197-residue chain is Adrenodoxin-like protein 2, mitochondrial (197 aa).

Residues 1–74 (MVFHRLSRLG…TSFSTTSEKG (74 aa)) constitute a mitochondrion transit peptide. The 2Fe-2S ferredoxin-type domain maps to 81–184 (INVTFVDKDG…GVRLAIPSAT (104 aa)). Residues Cys-118, Cys-124, Cys-127, and Cys-165 each contribute to the [2Fe-2S] cluster site.

Belongs to the adrenodoxin/putidaredoxin family. [2Fe-2S] cluster is required as a cofactor.

The protein resides in the mitochondrion. Associates with the adrenodoxin reductase MFDR to form an efficient low potential electron transfer chain that is able to reduce cytochrome C. The sequence is that of Adrenodoxin-like protein 2, mitochondrial from Arabidopsis thaliana (Mouse-ear cress).